A 78-amino-acid chain; its full sequence is UPF0335 protein A1C_00850 (78 aa).

Belongs to the UPF0335 family.

The chain is UPF0335 protein A1C_00850 from Rickettsia akari (strain Hartford).